The chain runs to 280 residues: MAAVVALSLRRRFPAAALGGARLQACRGAQTAAAAAPRIKKFAIYRWDPDKTGDKPHMQTYEIDLNNCGPMVLDALIKIKNEIDSTLTFRRSCREGICGSCAMNINGGNTLACTRRIDTNLSKVSKIYPLPHMYVIKDLVPDLSNFYAQYKSIEPYLKKKDESQGGKEQYLQSIEDREKLDGLYECILCACCSTSCPSYWWNGDKYLGPAVLMQAYRWMIDSRDDFTEERLAKLQDPFSLYRCHTIMNCTQTCPKGLNPGKAIAEIKKMMATYKEKQASA.

The N-terminal 28 residues, 1-28 (MAAVVALSLRRRFPAAALGGARLQACRG), are a transit peptide targeting the mitochondrion. Positions 40 to 133 (KKFAIYRWDP…VSKIYPLPHM (94 aa)) constitute a 2Fe-2S ferredoxin-type domain. N6-acetyllysine is present on residues Lys51 and Lys55. The [2Fe-2S] cluster site is built by Cys93, Cys98, Cys101, and Cys113. An interaction with SDHAF1 region spans residues 146–218 (FYAQYKSIEP…PAVLMQAYRW (73 aa)). The 4Fe-4S ferredoxin-type domain maps to 176-206 (DREKLDGLYECILCACCSTSCPSYWWNGDKY). [4Fe-4S] cluster is bound by residues Cys186, Cys189, and Cys192. Cys196 serves as a coordination point for [3Fe-4S] cluster. Position 201 (Trp201) interacts with a ubiquinone. Cys243 and Cys249 together coordinate [3Fe-4S] cluster. Cys253 serves as a coordination point for [4Fe-4S] cluster.

The protein belongs to the succinate dehydrogenase/fumarate reductase iron-sulfur protein family. As to quaternary structure, component of complex II composed of four subunits: the flavoprotein (FP) SDHA, iron-sulfur protein (IP) SDHB, and a cytochrome b560 composed of SDHC and SDHD. Interacts with SDHAF1; the interaction is required for iron-sulfur cluster incorporation into SDHB. The cofactor is [2Fe-2S] cluster. [3Fe-4S] cluster is required as a cofactor. Requires [4Fe-4S] cluster as cofactor.

Its subcellular location is the mitochondrion inner membrane. It catalyses the reaction a quinone + succinate = fumarate + a quinol. The catalysed reaction is (R)-malate + a quinone = enol-oxaloacetate + a quinol. It carries out the reaction (S)-malate + a quinone = enol-oxaloacetate + a quinol. It participates in carbohydrate metabolism; tricarboxylic acid cycle; fumarate from succinate (eukaryal route): step 1/1. With respect to regulation, enol-oxaloacetate inhibits the succinate dehydrogenase activity. In terms of biological role, iron-sulfur protein (IP) subunit of the succinate dehydrogenase complex (mitochondrial respiratory chain complex II), responsible for transferring electrons from succinate to ubiquinone (coenzyme Q). SDH also oxidizes malate to the non-canonical enol form of oxaloacetate, enol-oxaloacetate. Enol-oxaloacetate, which is a potent inhibitor of the succinate dehydrogenase activity, is further isomerized into keto-oxaloacetate. This is Succinate dehydrogenase [ubiquinone] iron-sulfur subunit, mitochondrial (SDHB) from Bos taurus (Bovine).